A 294-amino-acid chain; its full sequence is Nucleotide-binding protein LCA_0526 (294 aa).

Residue 12-19 participates in ATP binding; the sequence is GMSGAGKT. 62–65 contributes to the GTP binding site; it reads DLRS.

This sequence belongs to the RapZ-like family.

Its function is as follows. Displays ATPase and GTPase activities. This Latilactobacillus sakei subsp. sakei (strain 23K) (Lactobacillus sakei subsp. sakei) protein is Nucleotide-binding protein LCA_0526.